The following is a 209-amino-acid chain: Outer-membrane lipoprotein LolB (209 aa).

The first 21 residues, 1–21 (MNNMKTFKFLTALFATAILTA), serve as a signal peptide directing secretion. The N-palmitoyl cysteine moiety is linked to residue Cys-22. Cys-22 carries the S-diacylglycerol cysteine lipid modification.

Belongs to the LolB family. In terms of assembly, monomer.

It is found in the cell outer membrane. Its function is as follows. Plays a critical role in the incorporation of lipoproteins in the outer membrane after they are released by the LolA protein. The protein is Outer-membrane lipoprotein LolB of Haemophilus influenzae (strain 86-028NP).